A 122-amino-acid polypeptide reads, in one-letter code: EVKLVESGGGLVQPGGSLRLSCATSGFTFSDFYMEWVRQSPGKRLEWIAASRNKANDYTTEYSASVKGRFIVSRDTSQSILYLQMNALRAEDTAIYYCARYYGSSYWYFDVWGAGTTVTVSS.

The region spanning E1–A114 is the Ig-like domain.

The chain is Ig heavy chain V region M511 from Mus musculus (Mouse).